The primary structure comprises 535 residues: Endogenous retrovirus group V member 2 Env polyprotein (535 aa).

Residues 1-21 (MTEKFLFLYLSLLPMPLLSQA) form the signal peptide. Over 22-321 (QWNENSLVSF…NTTQPRQKRA (300 aa)) the chain is Extracellular. An N-linked (GlcNAc...) asparagine glycan is attached at Asn68. A helical transmembrane segment spans residues 322 to 342 (LGLILAGMGAAIGMIAPWGGF). The Cytoplasmic segment spans residues 343 to 456 (TYHDVTLRNL…VKSALPSLNW (114 aa)). Residues 457-477 (FVPLLGPATVILLLFLFGPCF) form a helical membrane-spanning segment. The Extracellular segment spans residues 478-535 (FNLLIKCVSSRIKQFHMKSPQMERYQLSVIGGPSTYKHISPLDASGQRFRETMEEFSL).

The protein belongs to the gamma type-C retroviral envelope protein family. Expressed in placenta.

The protein resides in the membrane. This is Endogenous retrovirus group V member 2 Env polyprotein (ERVV-2) from Homo sapiens (Human).